We begin with the raw amino-acid sequence, 331 residues long: L-lactate dehydrogenase A chain (331 aa).

Residues 29–57 (GMVG…MEDK) and Arg-98 each bind NAD(+). 3 residues coordinate substrate: Arg-105, Asn-137, and Arg-168. Asn-137 lines the NAD(+) pocket. His-192 (proton acceptor) is an active-site residue. Thr-247 provides a ligand contact to substrate.

Belongs to the LDH/MDH superfamily. LDH family. As to quaternary structure, homotetramer.

The protein localises to the cytoplasm. It carries out the reaction (S)-lactate + NAD(+) = pyruvate + NADH + H(+). It functions in the pathway fermentation; pyruvate fermentation to lactate; (S)-lactate from pyruvate: step 1/1. Its function is as follows. Interconverts simultaneously and stereospecifically pyruvate and lactate with concomitant interconversion of NADH and NAD(+). In Gobionotothen gibberifrons (Humped rockcod), this protein is L-lactate dehydrogenase A chain (ldha).